A 1782-amino-acid chain; its full sequence is Atrochrysone carboxylic acid synthase (1782 aa).

An N-terminal acylcarrier protein transacylase domain (SAT) region spans residues 41–270 (HTYTKDRRYP…ALPVYGGLCH (230 aa)). Positions 407 to 841 (QSKIAIVGMS…GGNSTLAIEE (435 aa)) constitute a Ketosynthase family 3 (KS3) domain. Residues Cys580, His716, and His759 each act as for beta-ketoacyl synthase activity in the active site. A malonyl-CoA:ACP transacylase (MAT) domain region spans residues 946-1266 (FAFTGQGSSY…LGILHCAGVP (321 aa)). A product template (PT) domain region spans residues 1331-1648 (TSTVQQIIHE…RILLNRFFSA (318 aa)). The segment at 1335–1468 (QQIIHEQYDG…ATVYYEEASD (134 aa)) is N-terminal hotdog fold. Residues 1335–1643 (QQIIHEQYDG…FRRYPRILLN (309 aa)) form the PKS/mFAS DH domain. His1367 acts as the Proton acceptor; for dehydratase activity in catalysis. The interval 1495-1643 (VANRFTRRMA…FRRYPRILLN (149 aa)) is C-terminal hotdog fold. Asp1554 serves as the catalytic Proton donor; for dehydratase activity. Residues 1653-1703 (ARKSTPATSAPAPAPPAGSEALQPKAAPASTPAAPASADAPTTNGVKAAAE) form a disordered region. Over residues 1678 to 1695 (AAPASTPAAPASADAPTT) the composition is skewed to low complexity. One can recognise a Carrier domain in the interval 1704 to 1781 (PDANSTAAKA…DLKSWLLEYY (78 aa)). Ser1741 carries the O-(pantetheine 4'-phosphoryl)serine modification.

Specifically expressed in conidia.

The enzyme catalyses holo-[ACP] + 8 malonyl-CoA + 8 H(+) = atrochrysone carboxyl-[ACP] + 8 CO2 + 8 CoA + 2 H2O. It functions in the pathway secondary metabolite biosynthesis. Functionally, non-reducing polyketide synthase; part of the gene cluster that mediates the biosynthesis of trypacidin, a mycotoxin with antiprotozoal activity and that plays a role in the infection process. The pathway begins with the synthesis of atrochrysone thioester by the polyketide synthase (PKS) tpcC. The atrochrysone carboxyl ACP thioesterase tpcB then breaks the thioester bond and releases the atrochrysone carboxylic acid from tpcC. The decarboxylase tpcK converts atrochrysone carboxylic acid to atrochrysone which is further reduced into emodin anthrone. The next step is performed by the emodin anthrone oxygenase tpcL that catalyzes the oxidation of emodin anthrone to emodin. Emodin O-methyltransferase encoded by tpcA catalyzes methylation of the 8-hydroxy group of emodin to form questin. Ring cleavage of questin by questin oxidase tpcI leads to desmethylsulochrin via several intermediates including questin epoxide. Another methylation step catalyzed by tpcM leads to the formation of sulochrin which is further converted to monomethylsulfochrin by tpcH. Finally, the tpcJ catalyzes the conversion of monomethylsulfochrin to trypacidin. Trypacidin is toxic for human pulmonary and bronchial epithelial cells by initiating the intracellular formation of nitric oxide (NO) and hydrogen peroxide (H(2)O(2)), thus triggering host necrotic cell death. The trypacidin pathway is also able to produce endocrocin via a distinct route from the endocrocin Enc pathway. The polypeptide is Atrochrysone carboxylic acid synthase (Aspergillus fumigatus (strain ATCC MYA-4609 / CBS 101355 / FGSC A1100 / Af293) (Neosartorya fumigata)).